The primary structure comprises 155 residues: 6,7-dimethyl-8-ribityllumazine synthase (155 aa).

Residues Phe-24, 58 to 60 (AFE), and 82 to 84 (AII) contribute to the 5-amino-6-(D-ribitylamino)uracil site. 87–88 (AT) provides a ligand contact to (2S)-2-hydroxy-3-oxobutyl phosphate. His-90 (proton donor) is an active-site residue. Phe-115 is a binding site for 5-amino-6-(D-ribitylamino)uracil. Arg-129 is a (2S)-2-hydroxy-3-oxobutyl phosphate binding site.

This sequence belongs to the DMRL synthase family.

The enzyme catalyses (2S)-2-hydroxy-3-oxobutyl phosphate + 5-amino-6-(D-ribitylamino)uracil = 6,7-dimethyl-8-(1-D-ribityl)lumazine + phosphate + 2 H2O + H(+). The protein operates within cofactor biosynthesis; riboflavin biosynthesis; riboflavin from 2-hydroxy-3-oxobutyl phosphate and 5-amino-6-(D-ribitylamino)uracil: step 1/2. Catalyzes the formation of 6,7-dimethyl-8-ribityllumazine by condensation of 5-amino-6-(D-ribitylamino)uracil with 3,4-dihydroxy-2-butanone 4-phosphate. This is the penultimate step in the biosynthesis of riboflavin. This Prosthecochloris aestuarii (strain DSM 271 / SK 413) protein is 6,7-dimethyl-8-ribityllumazine synthase.